We begin with the raw amino-acid sequence, 419 residues long: Double-stranded RNA-binding protein 1 (419 aa).

DRBM domains are found at residues 15-84 (VFKS…ELAK) and 101-170 (LCKN…AIQS). The short motif at 207–222 (KARKAQFKKKAQKGKR) is the Bipartite nuclear localization element. A run of 6 repeats spans residues 247 to 274 (EKIE…SVET), 275 to 302 (EKIE…SVET), 303 to 330 (EKIE…SVET), 331 to 358 (EKIE…SVET), 359 to 386 (EKIE…SVET), and 387 to 414 (EKIE…SVET). The segment at 247 to 414 (EKIETTPNLE…KEAAFGSVET (168 aa)) is 6 X 28 AA repeats of E-K-I-E-T-T-P-N-L-E-[PS]-[PS]-S-C-M-[NS]-G-L-K-E-A-A-F-G-S-V-E-T.

As to quaternary structure, homodimer. Heterodimer with DRB2, DRB4 or DRB5. Interacts with SE and DCL1. Interacts with RCF3, RS40 and RS41. As to expression, expressed in rosette and cauline leaves, stems, roots, flowers and siliques.

It localises to the nucleus. It is found in the nucleus speckle. Functionally, double-stranded RNA-binding protein involved in RNA-mediated post-transcriptional gene silencing (PTGS). Functions in the microRNAs (miRNAs) biogenesis by assisting DICER-LIKE 1 (DCL1) in the accurate processing from primary miRNAs (pri-miRNAs) to miRNAs in the nucleus. Forms a complex with SERRATE (SE) and DCL1 to promote accurate processing of pri-miRNAs by DCL1. Binds and assist DCL1 for accurate processing of precursor miRNAs (pre-miRNA). Indirectly involved in the production of trans-acting small interfering RNAs (ta-siRNAs) derived from the TAS1, TAS2 or TAS3 endogenous transcripts by participating in the production of their initiating miRNAs. Involved with argonaute 1 (AGO1) in the guide strand selection from miRNA duplexes, presumably by directional loading of the miRNA duplex (guide stand and passenger strand) onto the RNA-induced silencing complex (RISC) for passenger strand degradation. Does not participate in sense transgene-induced post-transcriptional gene silencing (S-PTGS). Involved in several plant development aspects and response to hormones through its role in miRNAs processing. The sequence is that of Double-stranded RNA-binding protein 1 (DRB1) from Arabidopsis thaliana (Mouse-ear cress).